The primary structure comprises 267 residues: L-aspartate dehydrogenase (267 aa).

Ala-124 and Asn-190 together coordinate NAD(+). The active site involves His-218.

It belongs to the L-aspartate dehydrogenase family.

It carries out the reaction L-aspartate + NADP(+) + H2O = oxaloacetate + NH4(+) + NADPH + H(+). The enzyme catalyses L-aspartate + NAD(+) + H2O = oxaloacetate + NH4(+) + NADH + H(+). It functions in the pathway cofactor biosynthesis; NAD(+) biosynthesis; iminoaspartate from L-aspartate (dehydrogenase route): step 1/1. Functionally, specifically catalyzes the NAD or NADP-dependent dehydrogenation of L-aspartate to iminoaspartate. The chain is L-aspartate dehydrogenase from Methanococcus maripaludis (strain DSM 14266 / JCM 13030 / NBRC 101832 / S2 / LL).